Consider the following 428-residue polypeptide: Light-independent protochlorophyllide reductase subunit N (428 aa).

3 residues coordinate [4Fe-4S] cluster: cysteine 30, cysteine 55, and cysteine 116.

Belongs to the BchN/ChlN family. In terms of assembly, protochlorophyllide reductase is composed of three subunits; BchL, BchN and BchB. Forms a heterotetramer of two BchB and two BchN subunits. The cofactor is [4Fe-4S] cluster.

The enzyme catalyses chlorophyllide a + oxidized 2[4Fe-4S]-[ferredoxin] + 2 ADP + 2 phosphate = protochlorophyllide a + reduced 2[4Fe-4S]-[ferredoxin] + 2 ATP + 2 H2O. The protein operates within porphyrin-containing compound metabolism; bacteriochlorophyll biosynthesis (light-independent). Its function is as follows. Component of the dark-operative protochlorophyllide reductase (DPOR) that uses Mg-ATP and reduced ferredoxin to reduce ring D of protochlorophyllide (Pchlide) to form chlorophyllide a (Chlide). This reaction is light-independent. The NB-protein (BchN-BchB) is the catalytic component of the complex. The polypeptide is Light-independent protochlorophyllide reductase subunit N (Bradyrhizobium sp. (strain BTAi1 / ATCC BAA-1182)).